The sequence spans 492 residues: 2-succinylbenzoate--CoA ligase (492 aa).

It belongs to the ATP-dependent AMP-binding enzyme family. MenE subfamily.

It carries out the reaction 2-succinylbenzoate + ATP + CoA = 2-succinylbenzoyl-CoA + AMP + diphosphate. It functions in the pathway quinol/quinone metabolism; 1,4-dihydroxy-2-naphthoate biosynthesis; 1,4-dihydroxy-2-naphthoate from chorismate: step 5/7. Its pathway is quinol/quinone metabolism; menaquinone biosynthesis. Its function is as follows. Converts 2-succinylbenzoate (OSB) to 2-succinylbenzoyl-CoA (OSB-CoA). The sequence is that of 2-succinylbenzoate--CoA ligase from Geobacillus sp. (strain WCH70).